The chain runs to 438 residues: Methylenetetrahydrofolate--tRNA-(uracil-5-)-methyltransferase TrmFO (438 aa).

9–14 (GGGLAG) is an FAD binding site.

Belongs to the MnmG family. TrmFO subfamily. FAD is required as a cofactor.

The protein resides in the cytoplasm. The catalysed reaction is uridine(54) in tRNA + (6R)-5,10-methylene-5,6,7,8-tetrahydrofolate + NADH + H(+) = 5-methyluridine(54) in tRNA + (6S)-5,6,7,8-tetrahydrofolate + NAD(+). It catalyses the reaction uridine(54) in tRNA + (6R)-5,10-methylene-5,6,7,8-tetrahydrofolate + NADPH + H(+) = 5-methyluridine(54) in tRNA + (6S)-5,6,7,8-tetrahydrofolate + NADP(+). Functionally, catalyzes the folate-dependent formation of 5-methyl-uridine at position 54 (M-5-U54) in all tRNAs. The chain is Methylenetetrahydrofolate--tRNA-(uracil-5-)-methyltransferase TrmFO from Lactobacillus johnsonii (strain CNCM I-12250 / La1 / NCC 533).